The chain runs to 331 residues: Small ribosomal subunit protein uS2 (331 aa).

Belongs to the universal ribosomal protein uS2 family.

This is Small ribosomal subunit protein uS2 from Rhodopseudomonas palustris (strain HaA2).